Consider the following 255-residue polypeptide: Coenzyme F420:L-glutamate ligase (255 aa).

Residues 11-14 (IPLI), 40-41 (ST), and Lys45 each bind GTP. Asp109 contributes to the a divalent metal cation binding site. Asn112 serves as a coordination point for GTP. Residues Asp150, Thr151, and Glu208 each coordinate a divalent metal cation. GTP is bound at residue 206–213 (MGEGAGGT).

Belongs to the CofE family. In terms of assembly, homodimer. It depends on Mg(2+) as a cofactor. Mn(2+) is required as a cofactor. K(+) serves as cofactor.

The enzyme catalyses oxidized coenzyme F420-0 + GTP + L-glutamate = oxidized coenzyme F420-1 + GDP + phosphate + H(+). It catalyses the reaction oxidized coenzyme F420-1 + GTP + L-glutamate = oxidized coenzyme F420-2 + GDP + phosphate + H(+). It functions in the pathway cofactor biosynthesis; coenzyme F420 biosynthesis. Functionally, catalyzes the GTP-dependent successive addition of two or more gamma-linked L-glutamates to the L-lactyl phosphodiester of 7,8-didemethyl-8-hydroxy-5-deazariboflavin (F420-0) to form coenzyme F420-0-glutamyl-glutamate (F420-2) or polyglutamated F420 derivatives. This is Coenzyme F420:L-glutamate ligase from Methanosarcina barkeri (strain Fusaro / DSM 804).